The sequence spans 146 residues: MLSQIYPQAQHPYSFELNKDMHISAAHFIPRESAGACSRVHGHTYTVNITVAGDELDDSGFLVNFSVLKKLVHGNYDHTLLNDHEDFSQDDRYSLPTTEVVAKTIYDNVQAYLDTLENKPTCVQVFVRETPTSYCVYRPKKGGLNG.

His27 is a binding site for Zn(2+). The active-site Proton acceptor is Cys37. Zn(2+)-binding residues include His41 and His43. Active-site charge relay system residues include His78 and Glu129.

This sequence belongs to the PTPS family. QueD subfamily. Homotetramer. Zn(2+) serves as cofactor.

The enzyme catalyses 7,8-dihydroneopterin 3'-triphosphate + H2O = 6-carboxy-5,6,7,8-tetrahydropterin + triphosphate + acetaldehyde + 2 H(+). Its pathway is purine metabolism; 7-cyano-7-deazaguanine biosynthesis. Functionally, catalyzes the conversion of 7,8-dihydroneopterin triphosphate (H2NTP) to 6-carboxy-5,6,7,8-tetrahydropterin (CPH4) and acetaldehyde. The protein is 6-carboxy-5,6,7,8-tetrahydropterin synthase (queD) of Bacillus subtilis (strain 168).